Consider the following 431-residue polypeptide: Lipid storage droplets surface-binding protein 1 (431 aa).

Positions 397 to 431 (KVTGSDGGNSNHRSSRRRQDPNHYSATHNNINGVY) are disordered. The segment covering 418–431 (NHYSATHNNINGVY) has biased composition (polar residues).

This sequence belongs to the perilipin family.

It is found in the cytoplasm. It localises to the lipid droplet. Required for normal deposition of neutral lipids in the oocyte. The sequence is that of Lipid storage droplets surface-binding protein 1 from Drosophila melanogaster (Fruit fly).